We begin with the raw amino-acid sequence, 648 residues long: Macrolide export ATP-binding/permease protein MacB (648 aa).

The ABC transporter domain occupies 5 to 243 (LELCNVSRSY…QGVDAAVVNT (239 aa)). Position 41-48 (41-48 (GVSGSGKS)) interacts with ATP. 5 helical membrane passes run 273–293 (LLTM…VVVG), 417–437 (ANVV…IGVA), 523–543 (LFLT…VMNI), 577–597 (VLVC…IAFM), and 611–631 (LTAL…FGWL).

Belongs to the ABC transporter superfamily. Macrolide exporter (TC 3.A.1.122) family. As to quaternary structure, homodimer. Part of the tripartite efflux system MacAB-TolC, which is composed of an inner membrane transporter, MacB, a periplasmic membrane fusion protein, MacA, and an outer membrane component, TolC. The complex forms a large protein conduit and can translocate molecules across both the inner and outer membranes. Interacts with MacA.

The protein localises to the cell inner membrane. Part of the tripartite efflux system MacAB-TolC. MacB is a non-canonical ABC transporter that contains transmembrane domains (TMD), which form a pore in the inner membrane, and an ATP-binding domain (NBD), which is responsible for energy generation. Confers resistance against macrolides. The sequence is that of Macrolide export ATP-binding/permease protein MacB from Salmonella typhimurium (strain LT2 / SGSC1412 / ATCC 700720).